Here is a 72-residue protein sequence, read N- to C-terminus: ATP-dependent Clp protease ATP-binding subunit ClpA homolog (72 aa).

This sequence belongs to the ClpA/ClpB family.

Its subcellular location is the plastid. It is found in the chloroplast. In terms of biological role, may interact with a ClpP-like protease involved in degradation of denatured proteins in the chloroplast. This is ATP-dependent Clp protease ATP-binding subunit ClpA homolog from Populus euphratica (Euphrates poplar).